The sequence spans 146 residues: Spermidine export protein MdtJ (146 aa).

The next 4 helical transmembrane spans lie at 1–21 (MIYWIFLVLAIICEVIGTLSM), 31–51 (TGMIVMWLMIATSYIFLAIAV), 54–74 (VALGVAYALWEGIGIVIITTF), and 76–96 (VLWFGESLSALKLGGLAMLIA).

This sequence belongs to the drug/metabolite transporter (DMT) superfamily. Small multidrug resistance (SMR) (TC 2.A.7.1) family. MdtJ subfamily. Forms a complex with MdtI.

Its subcellular location is the cell inner membrane. Functionally, catalyzes the excretion of spermidine. This is Spermidine export protein MdtJ from Proteus mirabilis (strain HI4320).